We begin with the raw amino-acid sequence, 966 residues long: Glycine dehydrogenase (decarboxylating) (966 aa).

Residue Lys713 is modified to N6-(pyridoxal phosphate)lysine.

Belongs to the GcvP family. In terms of assembly, the glycine cleavage system is composed of four proteins: P, T, L and H. It depends on pyridoxal 5'-phosphate as a cofactor.

It catalyses the reaction N(6)-[(R)-lipoyl]-L-lysyl-[glycine-cleavage complex H protein] + glycine + H(+) = N(6)-[(R)-S(8)-aminomethyldihydrolipoyl]-L-lysyl-[glycine-cleavage complex H protein] + CO2. Its function is as follows. The glycine cleavage system catalyzes the degradation of glycine. The P protein binds the alpha-amino group of glycine through its pyridoxal phosphate cofactor; CO(2) is released and the remaining methylamine moiety is then transferred to the lipoamide cofactor of the H protein. The chain is Glycine dehydrogenase (decarboxylating) from Psychromonas ingrahamii (strain DSM 17664 / CCUG 51855 / 37).